Reading from the N-terminus, the 564-residue chain is Dihydroxy-acid dehydratase (564 aa).

A [2Fe-2S] cluster-binding site is contributed by Cys-55. Asp-87 serves as a coordination point for Mg(2+). Cys-128 lines the [2Fe-2S] cluster pocket. Mg(2+)-binding residues include Asp-129 and Lys-130. An N6-carboxylysine modification is found at Lys-130. Cys-200 contributes to the [2Fe-2S] cluster binding site. Glu-452 is a binding site for Mg(2+). The active-site Proton acceptor is Ser-478.

The protein belongs to the IlvD/Edd family. As to quaternary structure, homodimer. Requires [2Fe-2S] cluster as cofactor. It depends on Mg(2+) as a cofactor.

It carries out the reaction (2R)-2,3-dihydroxy-3-methylbutanoate = 3-methyl-2-oxobutanoate + H2O. It catalyses the reaction (2R,3R)-2,3-dihydroxy-3-methylpentanoate = (S)-3-methyl-2-oxopentanoate + H2O. It functions in the pathway amino-acid biosynthesis; L-isoleucine biosynthesis; L-isoleucine from 2-oxobutanoate: step 3/4. Its pathway is amino-acid biosynthesis; L-valine biosynthesis; L-valine from pyruvate: step 3/4. In terms of biological role, functions in the biosynthesis of branched-chain amino acids. Catalyzes the dehydration of (2R,3R)-2,3-dihydroxy-3-methylpentanoate (2,3-dihydroxy-3-methylvalerate) into 2-oxo-3-methylpentanoate (2-oxo-3-methylvalerate) and of (2R)-2,3-dihydroxy-3-methylbutanoate (2,3-dihydroxyisovalerate) into 2-oxo-3-methylbutanoate (2-oxoisovalerate), the penultimate precursor to L-isoleucine and L-valine, respectively. The polypeptide is Dihydroxy-acid dehydratase (Albidiferax ferrireducens (strain ATCC BAA-621 / DSM 15236 / T118) (Rhodoferax ferrireducens)).